A 140-amino-acid polypeptide reads, in one-letter code: Hexon-interlacing protein (140 aa).

The stretch at 100–127 (LTALLAQLDSLTRELNVVSQQLLDLRQQ) forms a coiled coil. S135 is modified (phosphoserine; by host).

This sequence belongs to the adenoviridae hexon-interlacing protein family. In terms of assembly, homotrimer. Interacts with hexon protein; this interaction tethers the hexons together. Self-interacts with adjacent proteins. Interacts with kinesin light chain KLC1; this interaction leads to capsid disruption at the nuclear pore complex during virus entry into host cell.

It localises to the virion. It is found in the host nucleus. In terms of biological role, structural component of the virion that forms triskelion structures consisting of three molecules that stabilize three hexon trimers at the center of each icosahedral facet and fixes the peripentonal hexons. Dispensable for assembly. During virus entry, recruits the anterograde motor kinesin-1 to the capsid docked at the nuclear pore complex thereby subjecting the docked capsid to a pulling force. The resulting tension leads to capsid disruption, dispersion of capsid fragments toward cell periphery and eventually viral DNA entry into the host nucleus. The protein is Hexon-interlacing protein of Human adenovirus C serotype 2 (HAdV-2).